Here is a 231-residue protein sequence, read N- to C-terminus: Large ribosomal subunit protein uL1 (231 aa).

The protein belongs to the universal ribosomal protein uL1 family. As to quaternary structure, part of the 50S ribosomal subunit.

Its function is as follows. Binds directly to 23S rRNA. The L1 stalk is quite mobile in the ribosome, and is involved in E site tRNA release. Functionally, protein L1 is also a translational repressor protein, it controls the translation of the L11 operon by binding to its mRNA. The sequence is that of Large ribosomal subunit protein uL1 from Legionella pneumophila (strain Paris).